Here is a 78-residue protein sequence, read N- to C-terminus: Small ribosomal subunit protein bS18B (78 aa).

The tract at residues 1–22 (MPRKPVRKVASTPRPNPLDQNG) is disordered.

The protein belongs to the bacterial ribosomal protein bS18 family. Part of the 30S ribosomal subunit. Forms a tight heterodimer with protein bS6.

Its function is as follows. Binds as a heterodimer with protein bS6 to the central domain of the 16S rRNA, where it helps stabilize the platform of the 30S subunit. The chain is Small ribosomal subunit protein bS18B from Streptomyces avermitilis (strain ATCC 31267 / DSM 46492 / JCM 5070 / NBRC 14893 / NCIMB 12804 / NRRL 8165 / MA-4680).